The primary structure comprises 253 residues: Small ribosomal subunit protein uS5 (253 aa).

Residues 1–30 (MAESAPRGFGRGGRGGRGRGRGRRGAKRDE) form a disordered region. The span at 14-26 (RGGRGRGRGRRGA) shows a compositional bias: basic residues. Positions 75–138 (LNDEVMKVVP…IMGKLSIMPI (64 aa)) constitute an S5 DRBM domain.

It belongs to the universal ribosomal protein uS5 family. Component of the small ribosomal subunit (SSU). Mature yeast ribosomes consist of a small (40S) and a large (60S) subunit. The 40S small subunit contains 1 molecule of ribosomal RNA (18S rRNA) and at least 33 different proteins. The large 60S subunit contains 3 rRNA molecules (25S, 5.8S and 5S rRNA) and at least 46 different proteins. Interacts with snoRNA U3. Interacts with MPP10. Component of the ribosomal small subunit (SSU) processome composed of at least 40 protein subunits and snoRNA U3.

The protein resides in the cytoplasm. Component of the ribosome, a large ribonucleoprotein complex responsible for the synthesis of proteins in the cell. The small ribosomal subunit (SSU) binds messenger RNAs (mRNAs) and translates the encoded message by selecting cognate aminoacyl-transfer RNA (tRNA) molecules. The large subunit (LSU) contains the ribosomal catalytic site termed the peptidyl transferase center (PTC), which catalyzes the formation of peptide bonds, thereby polymerizing the amino acids delivered by tRNAs into a polypeptide chain. The nascent polypeptides leave the ribosome through a tunnel in the LSU and interact with protein factors that function in enzymatic processing, targeting, and the membrane insertion of nascent chains at the exit of the ribosomal tunnel. Plays a role in the assembly and function of the 40S ribosomal subunit. Mutations in this protein affects the control of translational fidelity. Involved in nucleolar processing of pre-18S ribosomal RNA and ribosome assembly. In terms of biological role, component of the ribosome, a large ribonucleoprotein complex responsible for the synthesis of proteins in the cell. The small ribosomal subunit (SSU) binds messenger RNAs (mRNAs) and translates the encoded message by selecting cognate aminoacyl-transfer RNA (tRNA) molecules. The large subunit (LSU) contains the ribosomal catalytic site termed the peptidyl transferase center (PTC), which catalyzes the formation of peptide bonds, thereby polymerizing the amino acids delivered by tRNAs into a polypeptide chain. The nascent polypeptides leave the ribosome through a tunnel in the LSU and interact with protein factors that function in enzymatic processing, targeting, and the membrane insertion of nascent chains at the exit of the ribosomal tunnel. uS5 is important for the assembly and function of the 40S ribosomal subunit. Mutations in this protein affects the control of translational fidelity. Involved in nucleolar processing of pre-18S ribosomal RNA and ribosome assembly. The polypeptide is Small ribosomal subunit protein uS5 (rps2) (Schizosaccharomyces pombe (strain 972 / ATCC 24843) (Fission yeast)).